The sequence spans 142 residues: Universal stress protein D (142 aa).

The protein belongs to the universal stress protein A family.

The protein resides in the cytoplasm. Required for resistance to DNA-damaging agents. The chain is Universal stress protein D (uspD) from Escherichia coli (strain K12).